Reading from the N-terminus, the 295-residue chain is Light-independent protochlorophyllide reductase iron-sulfur ATP-binding protein (295 aa).

ATP is bound by residues 39–44 (GIGKST) and K68. S43 provides a ligand contact to Mg(2+). [4Fe-4S] cluster is bound by residues C124 and C158. 209 to 210 (NR) is a binding site for ATP.

It belongs to the NifH/BchL/ChlL family. As to quaternary structure, homodimer. Protochlorophyllide reductase is composed of three subunits; ChlL, ChlN and ChlB. [4Fe-4S] cluster is required as a cofactor.

The catalysed reaction is chlorophyllide a + oxidized 2[4Fe-4S]-[ferredoxin] + 2 ADP + 2 phosphate = protochlorophyllide a + reduced 2[4Fe-4S]-[ferredoxin] + 2 ATP + 2 H2O. It functions in the pathway porphyrin-containing compound metabolism; chlorophyll biosynthesis (light-independent). In terms of biological role, component of the dark-operative protochlorophyllide reductase (DPOR) that uses Mg-ATP and reduced ferredoxin to reduce ring D of protochlorophyllide (Pchlide) to form chlorophyllide a (Chlide). This reaction is light-independent. The L component serves as a unique electron donor to the NB-component of the complex, and binds Mg-ATP. The chain is Light-independent protochlorophyllide reductase iron-sulfur ATP-binding protein from Prochlorococcus marinus (strain MIT 9215).